A 546-amino-acid polypeptide reads, in one-letter code: Probable bifunctional SAT/APS kinase (546 aa).

The tract at residues 1–370 (MEKIKYLKSI…LAETYVPKHK (370 aa)) is sulfate adenylyltransferase. Residues 371-546 (QGFCVWLTGL…FLKKEGFIKD (176 aa)) are adenylsulfate kinase. 379–386 (GLPCAGKS) lines the ATP pocket. The active-site Phosphoserine intermediate is Ser453.

The protein in the N-terminal section; belongs to the sulfate adenylyltransferase family. This sequence in the C-terminal section; belongs to the APS kinase family.

It carries out the reaction sulfate + ATP + H(+) = adenosine 5'-phosphosulfate + diphosphate. The catalysed reaction is adenosine 5'-phosphosulfate + ATP = 3'-phosphoadenylyl sulfate + ADP + H(+). The protein operates within sulfur metabolism; hydrogen sulfide biosynthesis; sulfite from sulfate: step 1/3. Its pathway is sulfur metabolism; hydrogen sulfide biosynthesis; sulfite from sulfate: step 2/3. The polypeptide is Probable bifunctional SAT/APS kinase (sat/cysC) (Aquifex aeolicus (strain VF5)).